Here is a 279-residue protein sequence, read N- to C-terminus: Large ribosomal subunit protein uL2 (279 aa).

Composition is skewed to basic residues over residues 211-221 (GRSRWRGKTPH) and 256-279 (SYGK…RKGK). The interval 211–279 (GRSRWRGKTP…KFIVRGRKGK (69 aa)) is disordered.

It belongs to the universal ribosomal protein uL2 family. As to quaternary structure, part of the 50S ribosomal subunit. Forms a bridge to the 30S subunit in the 70S ribosome.

Its function is as follows. One of the primary rRNA binding proteins. Required for association of the 30S and 50S subunits to form the 70S ribosome, for tRNA binding and peptide bond formation. It has been suggested to have peptidyltransferase activity; this is somewhat controversial. Makes several contacts with the 16S rRNA in the 70S ribosome. This chain is Large ribosomal subunit protein uL2, found in Oenococcus oeni (strain ATCC BAA-331 / PSU-1).